A 541-amino-acid polypeptide reads, in one-letter code: Membrane protein insertase YidC (541 aa).

Residues 6–26 (SLLVLALIFISFLVYQQWQLD) traverse the membrane as a helical segment. The disordered stretch occupies residues 34–56 (EQTTSITATSDVPASSPSNSQAI). 4 consecutive transmembrane segments (helical) span residues 337–357 (FWLL…IICV), 416–436 (LGGC…YWTF), 454–474 (LSAQ…MFLL), and 495–515 (PLVF…YWLV).

Belongs to the OXA1/ALB3/YidC family. Type 1 subfamily. Interacts with the Sec translocase complex via SecD. Specifically interacts with transmembrane segments of nascent integral membrane proteins during membrane integration.

Its subcellular location is the cell inner membrane. Functionally, required for the insertion and/or proper folding and/or complex formation of integral membrane proteins into the membrane. Involved in integration of membrane proteins that insert both dependently and independently of the Sec translocase complex, as well as at least some lipoproteins. Aids folding of multispanning membrane proteins. The sequence is that of Membrane protein insertase YidC from Haemophilus influenzae (strain 86-028NP).